A 1024-amino-acid polypeptide reads, in one-letter code: Error-prone DNA polymerase (1024 aa).

It belongs to the DNA polymerase type-C family. DnaE2 subfamily.

Its subcellular location is the cytoplasm. It carries out the reaction DNA(n) + a 2'-deoxyribonucleoside 5'-triphosphate = DNA(n+1) + diphosphate. Its function is as follows. DNA polymerase involved in damage-induced mutagenesis and translesion synthesis (TLS). It is not the major replicative DNA polymerase. The sequence is that of Error-prone DNA polymerase from Vibrio vulnificus (strain CMCP6).